The primary structure comprises 253 residues: MTTIDLNCNLGESFGAYKMGNDDEILPFVSSINVACGFHAGDPSVMRQTVEKAMQHNVAIGAHPGFPDLIGFGRRNMNVSANEVYDYVLYQIDALDAFVKAAGGKMQHVKPHGALYNMAATNPEIADAIAKAIYHMNSSLSLYGLANSEAFIQAAEKYNITLVQEAFADRTYKEDGTLTSRTEENALIKNEDEAIKQVLQMVKEGYVNSVNGEKVAVQAQTICLHGDGEKAVQFARKIYRTFEHNKISICAPK.

It belongs to the LamB/PxpA family. In terms of assembly, forms a complex composed of PxpA, PxpB and PxpC.

The catalysed reaction is 5-oxo-L-proline + ATP + 2 H2O = L-glutamate + ADP + phosphate + H(+). Functionally, catalyzes the cleavage of 5-oxoproline to form L-glutamate coupled to the hydrolysis of ATP to ADP and inorganic phosphate. This Bacillus anthracis (strain CDC 684 / NRRL 3495) protein is 5-oxoprolinase subunit A.